Reading from the N-terminus, the 760-residue chain is Rho GTPase-activating protein 26 (760 aa).

The BAR domain occupies 7–262 (EFSECCLDSP…MKENPHEHKN (256 aa)). Residues 265–369 (PYTMEGYLYV…WMEAMDGREP (105 aa)) enclose the PH domain. Positions 383-568 (AQLDSIGFSI…ILIENHEKIF (186 aa)) constitute a Rho-GAP domain. Disordered stretches follow at residues 571–617 (VPET…ESRN) and 658–701 (PNRP…SPIS). Positions 605–617 (HTAQPNEKQESRN) are enriched in polar residues. A compositionally biased stretch (low complexity) spans 674 to 701 (LSPSWPMFSAPSSPMPTSSTSSDSSPIS). Positions 702-760 (SPLRKARALYACKAEHDSELSFTAGTVFDNVHPSQEPGWLEGTLNGKTGLIPENYVEFL) constitute an SH3 domain.

Binds to the C-terminus of PTK2/FAK1. As to expression, detected in embryonic brain and liver, and at low levels in embryonic eye, heart, lung, intestine and skeletal muscle.

The protein resides in the cell junction. Its subcellular location is the focal adhesion. It localises to the cytoplasm. It is found in the cytoskeleton. The protein localises to the endosome membrane. Functionally, GTPase-activating protein for RHOA and CDC42. May be involved in the regulation of neosynthesized protein export through a Rab-endososomal dependent export route. The protein is Rho GTPase-activating protein 26 (ARHGAP26) of Gallus gallus (Chicken).